The sequence spans 354 residues: Uroporphyrinogen decarboxylase (354 aa).

Substrate is bound by residues 27 to 31 (RQAGR), aspartate 77, tyrosine 154, threonine 209, and histidine 327.

Belongs to the uroporphyrinogen decarboxylase family. Homodimer.

The protein resides in the cytoplasm. The enzyme catalyses uroporphyrinogen III + 4 H(+) = coproporphyrinogen III + 4 CO2. It participates in porphyrin-containing compound metabolism; protoporphyrin-IX biosynthesis; coproporphyrinogen-III from 5-aminolevulinate: step 4/4. Its function is as follows. Catalyzes the decarboxylation of four acetate groups of uroporphyrinogen-III to yield coproporphyrinogen-III. This Cronobacter sakazakii (strain ATCC BAA-894) (Enterobacter sakazakii) protein is Uroporphyrinogen decarboxylase.